A 371-amino-acid chain; its full sequence is 4-hydroxy-3-methylbut-2-en-1-yl diphosphate synthase (flavodoxin) (371 aa).

[4Fe-4S] cluster-binding residues include Cys272, Cys275, Cys307, and Glu314.

This sequence belongs to the IspG family. The cofactor is [4Fe-4S] cluster.

The enzyme catalyses (2E)-4-hydroxy-3-methylbut-2-enyl diphosphate + oxidized [flavodoxin] + H2O + 2 H(+) = 2-C-methyl-D-erythritol 2,4-cyclic diphosphate + reduced [flavodoxin]. Its pathway is isoprenoid biosynthesis; isopentenyl diphosphate biosynthesis via DXP pathway; isopentenyl diphosphate from 1-deoxy-D-xylulose 5-phosphate: step 5/6. Converts 2C-methyl-D-erythritol 2,4-cyclodiphosphate (ME-2,4cPP) into 1-hydroxy-2-methyl-2-(E)-butenyl 4-diphosphate. In Pseudomonas paraeruginosa (strain DSM 24068 / PA7) (Pseudomonas aeruginosa (strain PA7)), this protein is 4-hydroxy-3-methylbut-2-en-1-yl diphosphate synthase (flavodoxin).